Here is a 446-residue protein sequence, read N- to C-terminus: Cyclin-F2-2 (446 aa).

A disordered region spans residues 191-216 (YNGDNDAPAPDNSTASRPQLCAPYDD).

The protein belongs to the cyclin family. Cyclin F subfamily.

This is Cyclin-F2-2 (CYCF2-2) from Oryza sativa subsp. japonica (Rice).